The primary structure comprises 402 residues: MLSEKTIEIVKSTVPLLQEKGVEITTRFYEILFSEHPELLNIFNHTNQKKGRQQQALANAVYAAATYIDNLEAIIPVVKQIGHKHRSLGIKAEHYPIVGTCLLRAIKEVAGAPDEVLNAWGEAYGVIADAFISIEAEMYEEAAHKEGGWKDFRNFVVVKKVKESDVITSFYLKPEDGGKVSSFIPGQYVTVQINIEGETYTHNRQYSLSDAPGKEYYRISVKKEKGVDTPDGKVSNYLHDHVKEGDMLPVSAPAGDFVLNMDSTLPVVLISGGVGITPMMSMLNTLIEQDSKRNVCFVHAAINSNTHAMKEHVEAVDNEYEQVKAYTCYSAPTEKDLEMKNFDKEGFVEREWLQTIIPTTEAEFYFCGPVPFMKHINAVLTDLGVKQEHIHYEFFGPAASLQ.

The Globin domain maps to 1-136 (MLSEKTIEIV…IADAFISIEA (136 aa)). Heme b is bound at residue His-85. Catalysis depends on charge relay system residues Tyr-95 and Glu-135. The reductase stretch occupies residues 147–402 (GGWKDFRNFV…EFFGPAASLQ (256 aa)). An FAD-binding FR-type domain is found at 150–260 (KDFRNFVVVK…SAPAGDFVLN (111 aa)). FAD-binding positions include Tyr-188 and 204-207 (RQYS). 273-278 (GVGITP) serves as a coordination point for NADP(+). 394 to 397 (FFGP) lines the FAD pocket.

This sequence belongs to the globin family. Two-domain flavohemoproteins subfamily. In the C-terminal section; belongs to the flavoprotein pyridine nucleotide cytochrome reductase family. It depends on heme b as a cofactor. Requires FAD as cofactor.

It catalyses the reaction 2 nitric oxide + NADPH + 2 O2 = 2 nitrate + NADP(+) + H(+). The enzyme catalyses 2 nitric oxide + NADH + 2 O2 = 2 nitrate + NAD(+) + H(+). In terms of biological role, is involved in NO detoxification in an aerobic process, termed nitric oxide dioxygenase (NOD) reaction that utilizes O(2) and NAD(P)H to convert NO to nitrate, which protects the bacterium from various noxious nitrogen compounds. Therefore, plays a central role in the inducible response to nitrosative stress. The polypeptide is Flavohemoprotein (Bacillus thuringiensis subsp. konkukian (strain 97-27)).